The primary structure comprises 148 residues: Endoribonuclease YbeY (148 aa).

Residues H102, H106, and H112 each contribute to the Zn(2+) site.

Belongs to the endoribonuclease YbeY family. Zn(2+) serves as cofactor.

It localises to the cytoplasm. Its function is as follows. Single strand-specific metallo-endoribonuclease involved in late-stage 70S ribosome quality control and in maturation of the 3' terminus of the 16S rRNA. This chain is Endoribonuclease YbeY, found in Phytoplasma mali (strain AT).